Consider the following 69-residue polypeptide: Cytochrome c oxidase subunit 8A, mitochondrial (69 aa).

A mitochondrion-targeting transit peptide spans 1 to 25 (MSVLTPLLLRGLTGSARRLPVPRAQ). An SIFI-degron motif is present at residues 2–19 (SVLTPLLLRGLTGSARRL). Residues 26–36 (VHSMPPEQKLG) lie on the Mitochondrial matrix side of the membrane. The chain crosses the membrane as a helical span at residues 37-60 (VLELAIGFTSCLVTFLLPAGWILS). Residues 61–69 (HLDSYKKRG) lie on the Mitochondrial intermembrane side of the membrane.

Belongs to the cytochrome c oxidase VIII family. In terms of assembly, component of the cytochrome c oxidase (complex IV, CIV), a multisubunit enzyme composed of 14 subunits. The complex is composed of a catalytic core of 3 subunits MT-CO1, MT-CO2 and MT-CO3, encoded in the mitochondrial DNA, and 11 supernumerary subunits COX4I, COX5A, COX5B, COX6A, COX6B, COX6C, COX7A, COX7B, COX7C, COX8 and NDUFA4, which are encoded in the nuclear genome. The complex exists as a monomer or a dimer and forms supercomplexes (SCs) in the inner mitochondrial membrane with NADH-ubiquinone oxidoreductase (complex I, CI) and ubiquinol-cytochrome c oxidoreductase (cytochrome b-c1 complex, complex III, CIII), resulting in different assemblies (supercomplex SCI(1)III(2)IV(1) and megacomplex MCI(2)III(2)IV(2)). Post-translationally, in response to mitochondrial stress, the precursor protein is ubiquitinated by the SIFI complex in the cytoplasm before mitochondrial import, leading to its degradation. Within the SIFI complex, UBR4 initiates ubiquitin chain that are further elongated or branched by KCMF1.

It is found in the mitochondrion inner membrane. It participates in energy metabolism; oxidative phosphorylation. Component of the cytochrome c oxidase, the last enzyme in the mitochondrial electron transport chain which drives oxidative phosphorylation. The respiratory chain contains 3 multisubunit complexes succinate dehydrogenase (complex II, CII), ubiquinol-cytochrome c oxidoreductase (cytochrome b-c1 complex, complex III, CIII) and cytochrome c oxidase (complex IV, CIV), that cooperate to transfer electrons derived from NADH and succinate to molecular oxygen, creating an electrochemical gradient over the inner membrane that drives transmembrane transport and the ATP synthase. Cytochrome c oxidase is the component of the respiratory chain that catalyzes the reduction of oxygen to water. Electrons originating from reduced cytochrome c in the intermembrane space (IMS) are transferred via the dinuclear copper A center (CU(A)) of subunit 2 and heme A of subunit 1 to the active site in subunit 1, a binuclear center (BNC) formed by heme A3 and copper B (CU(B)). The BNC reduces molecular oxygen to 2 water molecules using 4 electrons from cytochrome c in the IMS and 4 protons from the mitochondrial matrix. This chain is Cytochrome c oxidase subunit 8A, mitochondrial (COX8A), found in Saimiri sciureus (Common squirrel monkey).